The sequence spans 415 residues: Gamma-glutamyl phosphate reductase (415 aa).

The protein belongs to the gamma-glutamyl phosphate reductase family.

It is found in the cytoplasm. The catalysed reaction is L-glutamate 5-semialdehyde + phosphate + NADP(+) = L-glutamyl 5-phosphate + NADPH + H(+). It participates in amino-acid biosynthesis; L-proline biosynthesis; L-glutamate 5-semialdehyde from L-glutamate: step 2/2. Catalyzes the NADPH-dependent reduction of L-glutamate 5-phosphate into L-glutamate 5-semialdehyde and phosphate. The product spontaneously undergoes cyclization to form 1-pyrroline-5-carboxylate. The polypeptide is Gamma-glutamyl phosphate reductase (Clostridium perfringens (strain SM101 / Type A)).